We begin with the raw amino-acid sequence, 504 residues long: Cytochrome P450 71B4 (504 aa).

Residues 1–21 form a helical membrane-spanning segment; the sequence is MVSLLSFFLLLLVPIFFLLIF. Cys-446 contacts heme.

The protein belongs to the cytochrome P450 family. It depends on heme as a cofactor.

The protein localises to the membrane. The polypeptide is Cytochrome P450 71B4 (CYP71B4) (Arabidopsis thaliana (Mouse-ear cress)).